Reading from the N-terminus, the 333-residue chain is D-lactate dehydrogenase (333 aa).

Residues 156–157, Asp176, 207–208, Asn213, 234–236, and Asp260 each bind NAD(+); these read HI, VP, and VSR. The active site involves Arg236. Glu265 is a catalytic residue. Catalysis depends on His297, which acts as the Proton donor.

Belongs to the D-isomer specific 2-hydroxyacid dehydrogenase family. As to quaternary structure, homodimer.

The enzyme catalyses (R)-lactate + NAD(+) = pyruvate + NADH + H(+). The chain is D-lactate dehydrogenase (ldhA) from Lactobacillus delbrueckii subsp. bulgaricus (strain ATCC 11842 / DSM 20081 / BCRC 10696 / JCM 1002 / NBRC 13953 / NCIMB 11778 / NCTC 12712 / WDCM 00102 / Lb 14).